Here is a 59-residue protein sequence, read N- to C-terminus: Potassium channel toxin alpha-KTx 16.2 (59 aa).

A signal peptide spans 1 to 22; sequence MKIFSILLVALIICSISICTEA. Intrachain disulfides connect cysteine 30-cysteine 51, cysteine 36-cysteine 56, and cysteine 40-cysteine 58.

The protein belongs to the short scorpion toxin superfamily. Potassium channel inhibitor family. Alpha-KTx 16 subfamily. In terms of tissue distribution, expressed by the venom gland.

The protein localises to the secreted. Its function is as follows. Alpha-KTx 16.2: inhibits large conductance calcium-activated potassium channels (KCa1.1/Slo-beta4 KCNMA1/KCNMB4). It appears to block channel activity by a simple bimolecular inhibition process. Shows a fast association rate and a slow dissociation rate of binding on rat brain synaptosome. Significantly inhibits voltage-dependent sodium current and voltage-dependent delayed rectifier potassium currents. Functionally, significantly inhibits voltage-dependent sodium current (Nav) and voltage-dependent delayed rectifier potassium current. The protein is Potassium channel toxin alpha-KTx 16.2 of Olivierus martensii (Manchurian scorpion).